We begin with the raw amino-acid sequence, 599 residues long: MPHGHPGSQPDEGGELSNGSSSGELTAQIRFLEDEIALLRRKLTESPRHARLLEQRLAEATERVNQLTERNTKLIDTLREARGQLLALREEVDRLAQPPSGYGVFLARFEDGTVDVFTSGRRMRVSVSPSVETSSLVMGQSVRLNEALTVVEGGDFERTGEVCALREVLDDGGPEGSVARALVVGHADEERVVWLAQPLLDSPLKAGDSLLVDSKAGFAYERVPKAEVEDLVLEEVPDVRYEDIGGLSRQIEQIRDAVELPFLHADLFREYKLRPPKGVLLYGPPGCGKTLIAKAVANSLAKQVSKARGEDHKDAKSFFLNIKGPELLNKFVGETERHIRLIFQRAREKASEGTPVIVFFDEMDSIFRTRGSGVSSDVETTIVPQLLSEIDGVEGLENVIVIGASNREDMIDPAILRPGRLDVKIKIERPDAEGAKDIFAKYLTDDLPLHADDLTEFGGDPAACIQGMVQHTVERMYEETDENRFLEVTYANGDKEVLYFRDFNSGAMIQNIVDRAKKSAIKSLLDTKQPGLSVRHLMDAIVDEFAENEDLPNTTNPDDWARISGKKGERIVYIRTLVTGKNQETGRAIDTATNTGQYL.

Residues 1–22 (MPHGHPGSQPDEGGELSNGSSS) are disordered. The stretch at 21 to 97 (SSGELTAQIR…LREEVDRLAQ (77 aa)) forms a coiled coil. 286–291 (GCGKTL) is a binding site for ATP. The docks into pockets in the proteasome alpha-ring stretch occupies residues 598 to 599 (YL).

Belongs to the AAA ATPase family. As to quaternary structure, homohexamer. Assembles into a hexameric ring structure that caps the 20S proteasome core. Strongly interacts with the prokaryotic ubiquitin-like protein Pup through a hydrophobic interface; the interacting region of ARC lies in its N-terminal coiled-coil domain. There is one Pup binding site per ARC hexamer ring. Upon ATP-binding, the C-terminus of ARC interacts with the alpha-rings of the proteasome core, possibly by binding to the intersubunit pockets.

Its pathway is protein degradation; proteasomal Pup-dependent pathway. Functionally, ATPase which is responsible for recognizing, binding, unfolding and translocation of pupylated proteins into the bacterial 20S proteasome core particle. May be essential for opening the gate of the 20S proteasome via an interaction with its C-terminus, thereby allowing substrate entry and access to the site of proteolysis. Thus, the C-termini of the proteasomal ATPase may function like a 'key in a lock' to induce gate opening and therefore regulate proteolysis. The protein is Proteasome-associated ATPase of Actinosynnema mirum (strain ATCC 29888 / DSM 43827 / JCM 3225 / NBRC 14064 / NCIMB 13271 / NRRL B-12336 / IMRU 3971 / 101).